Here is a 60-residue protein sequence, read N- to C-terminus: UPF0337 protein asr1134 (60 aa).

2 stretches are compositionally biased toward basic and acidic residues: residues 1–18 (MSLE…EGKA) and 29–60 (PEDK…KKID). The disordered stretch occupies residues 1-60 (MSLEDRAKATGKNIEGKAQEALGNVTGDPEDKAEGKAKQAESEVRHGVEDVKDNVKKKID).

The protein belongs to the UPF0337 (CsbD) family.

The chain is UPF0337 protein asr1134 from Nostoc sp. (strain PCC 7120 / SAG 25.82 / UTEX 2576).